The following is a 308-amino-acid chain: UPF0282 protein SSO3251 (308 aa).

Belongs to the UPF0282 family.

The polypeptide is UPF0282 protein SSO3251 (Saccharolobus solfataricus (strain ATCC 35092 / DSM 1617 / JCM 11322 / P2) (Sulfolobus solfataricus)).